The chain runs to 363 residues: Chorismate synthase (363 aa).

NADP(+)-binding residues include arginine 48 and arginine 54. FMN contacts are provided by residues 131-133 (RSS), 244-245 (NA), glycine 288, 303-307 (KPTSS), and arginine 329.

This sequence belongs to the chorismate synthase family. Homotetramer. The cofactor is FMNH2.

The enzyme catalyses 5-O-(1-carboxyvinyl)-3-phosphoshikimate = chorismate + phosphate. The protein operates within metabolic intermediate biosynthesis; chorismate biosynthesis; chorismate from D-erythrose 4-phosphate and phosphoenolpyruvate: step 7/7. Its function is as follows. Catalyzes the anti-1,4-elimination of the C-3 phosphate and the C-6 proR hydrogen from 5-enolpyruvylshikimate-3-phosphate (EPSP) to yield chorismate, which is the branch point compound that serves as the starting substrate for the three terminal pathways of aromatic amino acid biosynthesis. This reaction introduces a second double bond into the aromatic ring system. The sequence is that of Chorismate synthase from Hyphomonas neptunium (strain ATCC 15444).